A 103-amino-acid chain; its full sequence is UPF0145 protein Amet_0532 (103 aa).

This sequence belongs to the UPF0145 family.

The sequence is that of UPF0145 protein Amet_0532 from Alkaliphilus metalliredigens (strain QYMF).